Here is a 269-residue protein sequence, read N- to C-terminus: MKPFKTSWADEVEADYVDGLPPCSEYIEGDYKYVTEYKFNDDGKKVKVVRTFKIEKQVVSKAVARRRGWVKFGDSRLDKPGPNSQTTMASEEIFMLFMGSKEFEQTHETQMDAGKNIAKCRICNGEHWSVNCPYKGTSMDSKTLMESKANAAAAAALNDPSKPGKYVPPFMKDGAGGAGGKGRERDDSSAVRISNLSESMTETDLEELVKKIGPHTKMYLAREKNTGLCKGFAYVHFKFRQDAAAAIEILNGHGYDHLILCVEWSKPQP.

The region spanning 189-267 (SAVRISNLSE…LILCVEWSKP (79 aa)) is the RRM domain.

This sequence belongs to the eIF-3 subunit G family. As to quaternary structure, component of the eukaryotic translation initiation factor 3 (eIF-3) complex. The eIF-3 complex interacts with pix.

It localises to the cytoplasm. Its function is as follows. RNA-binding component of the eukaryotic translation initiation factor 3 (eIF-3) complex, which is involved in protein synthesis of a specialized repertoire of mRNAs and, together with other initiation factors, stimulates binding of mRNA and methionyl-tRNAi to the 40S ribosome. The eIF-3 complex specifically targets and initiates translation of a subset of mRNAs involved in cell proliferation. This subunit can bind 18S rRNA. This chain is Eukaryotic translation initiation factor 3 subunit G-2, found in Drosophila ananassae (Fruit fly).